The following is a 1001-amino-acid chain: Translation initiation factor IF-2 (1001 aa).

The interval 34–404 (KSHSSTISES…SRGDRRDRKE (371 aa)) is disordered. Residues 67-80 (SRPESKEDKSDPKQ) show a composition bias toward basic and acidic residues. Composition is skewed to pro residues over residues 98–107 (PARPTPPPRP), 147–157 (PTQPLAPPPVP), and 163–172 (PSKPAPPTPP). A compositionally biased stretch (low complexity) spans 173-190 (AKKAAPAPRLAGPPGRTA). Basic and acidic residues-rich tracts occupy residues 212–230 (SLKDNRGQARSPGDREEKV) and 238–252 (PKPKVELRRPKPPRP). Acidic residues predominate over residues 332-342 (DDDDDDLDIDG). 2 stretches are compositionally biased toward low complexity: residues 362-371 (KSLAAKPSTP) and 385-394 (AGSSAGGSSR). Positions 395–404 (SRGDRRDRKE) are enriched in basic and acidic residues. Positions 493-666 (RRPPVVTIMG…LLVSEVEELV (174 aa)) constitute a tr-type G domain. Positions 502-509 (GHVDHGKT) are G1. Position 502–509 (502–509 (GHVDHGKT)) interacts with GTP. The G2 stretch occupies residues 527-531 (GITQH). The tract at residues 552 to 555 (DTPG) is G3. Residues 552-556 (DTPGH) and 606-609 (NKVD) each bind GTP. A G4 region spans residues 606 to 609 (NKVD). The tract at residues 642-644 (SAL) is G5.

Belongs to the TRAFAC class translation factor GTPase superfamily. Classic translation factor GTPase family. IF-2 subfamily.

The protein localises to the cytoplasm. One of the essential components for the initiation of protein synthesis. Protects formylmethionyl-tRNA from spontaneous hydrolysis and promotes its binding to the 30S ribosomal subunits. Also involved in the hydrolysis of GTP during the formation of the 70S ribosomal complex. In Synechocystis sp. (strain ATCC 27184 / PCC 6803 / Kazusa), this protein is Translation initiation factor IF-2 (infB).